The chain runs to 630 residues: Polygalacturonase-1 non-catalytic subunit beta (630 aa).

A signal peptide spans 1 to 27; that stretch reads MHTKIHLPPCILLLLLFSLPSFNVVVG. Residues 28–108 constitute a propeptide that is removed on maturation; that stretch reads GDGESGNPFT…MCAPDLSPSL (81 aa). N-linked (GlcNAc...) asparagine glycosylation is found at Asn-124, Asn-142, Asn-256, Asn-334, Asn-369, and Asn-387. A propeptide spanning residues 398 to 630 is cleaved from the precursor; that stretch reads EVNGGKKVNN…ENDMTWAIAD (233 aa). The 215-residue stretch at 415 to 629 folds into the BURP domain; the sequence is FFREKMLKSG…FENDMTWAIA (215 aa).

In terms of assembly, interacts with polygalacturonase-2 (isoenzymes PG2A and PG2B) to form heterodimers called polygalacturonase-1 (PG1). As to expression, mostly expressed in fruit pericarp. Also detected at low levels in cell wall of roots, leaves and flowers (at protein level).

It localises to the secreted. It is found in the extracellular space. Its subcellular location is the apoplast. The protein localises to the cell wall. Non-catalytic subunit of the polygalacturonase isozyme 1 (PG1). Necessary and sufficient to convert the polygalacturonase from its monomeric form PG2 to its heterodimeric form PG1. Seems to limit the depolymerization and solubilization of cell wall polyuronides mediated by PG2 during ripening, probably by recruiting PG2 to form PG1. The sequence is that of Polygalacturonase-1 non-catalytic subunit beta (GP1) from Solanum lycopersicum (Tomato).